A 190-amino-acid chain; its full sequence is Translation initiation factor IF-3 (190 aa).

The tract at residues 159–190 is disordered; sequence QSEVQQKPKREGRNMIMFLSPRKSPLIKKDNE.

The protein belongs to the IF-3 family. As to quaternary structure, monomer.

It localises to the cytoplasm. Its function is as follows. IF-3 binds to the 30S ribosomal subunit and shifts the equilibrium between 70S ribosomes and their 50S and 30S subunits in favor of the free subunits, thus enhancing the availability of 30S subunits on which protein synthesis initiation begins. The polypeptide is Translation initiation factor IF-3 (Prochlorococcus marinus (strain MIT 9215)).